Here is a 977-residue protein sequence, read N- to C-terminus: Disks large-associated protein 3 (977 aa).

A compositionally biased stretch (basic and acidic residues) spans 1–10; sequence MRGYHGDRGS. Disordered stretches follow at residues 1 to 30, 52 to 90, 137 to 167, 181 to 289, 398 to 417, and 529 to 582; these read MRGYHGDRGSHPRPARFADQQHMDVGPAAR, AGLGHLSPEGPLSLSEGPSSVGPEGGPGGVGAGGSSSTF, FHTLPYQRGPAGPGPGPGSGAAPEARSESPS, AKSH…CLDA, AMGDEESGDSDGSPKTSPKA, and PGSS…SADG. A compositionally biased stretch (low complexity) spans 53–73; that stretch reads GLGHLSPEGPLSLSEGPSSVG. At Ser58 the chain carries Phosphoserine. The segment covering 74–85 has biased composition (gly residues); sequence PEGGPGGVGAGG. A compositionally biased stretch (basic and acidic residues) spans 189–201; it reads PGKRDYNGPKAEG. A compositionally biased stretch (low complexity) spans 202–212; that stretch reads RSSSGGDSYSG. The segment covering 221–245 has biased composition (basic residues); that stretch reads SHHHHHHHHHHHHQSRHGKRSKSKD. Over residues 258–271 the composition is skewed to low complexity; sequence GWWSSDDNLDSDSG. Phosphoserine is present on residues Ser404, Ser407, Ser410, and Ser414. The span at 538–547 shows a compositional bias: pro residues; it reads APPPIPPGSQ. Phosphoserine is present on residues Ser641 and Ser643. 2 disordered regions span residues 739–788 and 906–939; these read EGYP…RTSP and EEKKVPPPIPKKPSRGRGVPVKERSLDSVDRQRQ. A compositionally biased stretch (pro residues) spans 754 to 763; sequence PGPPPVPAPG. Basic and acidic residues-rich tracts occupy residues 767–777 and 925–939; these read GRRDSWMERGS and PVKERSLDSVDRQRQ. Residues Ser930, Ser933, and Ser965 each carry the phosphoserine modification.

The protein belongs to the SAPAP family. Interacts with DLG1 and DLG4/PSD-95. As to expression, expressed in most brain regions.

The protein resides in the cell membrane. Its subcellular location is the postsynaptic density. It localises to the synapse. Functionally, may play a role in the molecular organization of synapses and neuronal cell signaling. Could be an adapter protein linking ion channel to the subsynaptic cytoskeleton. May induce enrichment of PSD-95/SAP90 at the plasma membrane. This chain is Disks large-associated protein 3 (Dlgap3), found in Rattus norvegicus (Rat).